Consider the following 79-residue polypeptide: uncharacterized protein (79 aa).

The signal sequence occupies residues 1 to 33 (MRFIIRTVMLIALVWIGLLLSGYGVLIGSKENA).

This is an uncharacterized protein from Escherichia coli O157:H7.